A 306-amino-acid polypeptide reads, in one-letter code: uncharacterized protein (306 aa).

The tract at residues 40–156 (HETCSTPGED…AVASASAPTE (117 aa)) is disordered. The segment covering 64 to 73 (EGINLGEEGL) has biased composition (low complexity). A compositionally biased stretch (basic residues) spans 129-139 (KQHKKAKKRKS).

This is an uncharacterized protein from Rattus norvegicus (Rat).